Here is a 539-residue protein sequence, read N- to C-terminus: Hydroxylamine reductase (539 aa).

Positions 3, 6, 15, and 21 each coordinate [4Fe-4S] cluster. Hybrid [4Fe-2O-2S] cluster-binding residues include His235, Glu259, Cys303, Cys394, Cys422, Cys447, Glu482, and Lys484. Cys394 is subject to Cysteine persulfide.

The protein belongs to the HCP family. [4Fe-4S] cluster serves as cofactor. Hybrid [4Fe-2O-2S] cluster is required as a cofactor.

The protein resides in the cytoplasm. It carries out the reaction A + NH4(+) + H2O = hydroxylamine + AH2 + H(+). Its function is as follows. Catalyzes the reduction of hydroxylamine to form NH(3) and H(2)O. This is Hydroxylamine reductase from Methanocaldococcus jannaschii (strain ATCC 43067 / DSM 2661 / JAL-1 / JCM 10045 / NBRC 100440) (Methanococcus jannaschii).